Consider the following 74-residue polypeptide: MIKHSWIHLYVMASAMSSSPIFFFFQRWSLTLSLRLECSSAIIKPTAASNSCVQVNLPPSMCDYRHEPLCLAFL.

Residues 7-26 (IHLYVMASAMSSSPIFFFFQ) traverse the membrane as a helical segment.

Its subcellular location is the membrane. This is an uncharacterized protein from Homo sapiens (Human).